A 417-amino-acid chain; its full sequence is Synaptic vesicle membrane protein VAT-1 homolog-like (417 aa).

2 disordered regions span residues 1 to 33 and 382 to 417; these read MAKEGVEKAEETEQMIEKETSKEPAEGGDGSHR and PTPLMANDSTETSEAGEEEEDHEGDSENKERMPFIQ. Ser390 bears the Phosphoserine mark. Thr391 and Thr393 each carry phosphothreonine. The residue at position 394 (Ser394) is a Phosphoserine. Over residues 395–405 the composition is skewed to acidic residues; it reads EAGEEEEDHEG. A compositionally biased stretch (basic and acidic residues) spans 406 to 417; the sequence is DSENKERMPFIQ.

This sequence belongs to the zinc-containing alcohol dehydrogenase family. Quinone oxidoreductase subfamily.

The polypeptide is Synaptic vesicle membrane protein VAT-1 homolog-like (Vat1l) (Mus musculus (Mouse)).